The chain runs to 274 residues: Hydroxyethylthiazole kinase (274 aa).

Substrate is bound at residue Met54. Arg129 and Thr175 together coordinate ATP. Gly202 lines the substrate pocket.

Belongs to the Thz kinase family. Requires Mg(2+) as cofactor.

It carries out the reaction 5-(2-hydroxyethyl)-4-methylthiazole + ATP = 4-methyl-5-(2-phosphooxyethyl)-thiazole + ADP + H(+). It functions in the pathway cofactor biosynthesis; thiamine diphosphate biosynthesis; 4-methyl-5-(2-phosphoethyl)-thiazole from 5-(2-hydroxyethyl)-4-methylthiazole: step 1/1. Its function is as follows. Catalyzes the phosphorylation of the hydroxyl group of 4-methyl-5-beta-hydroxyethylthiazole (THZ). The sequence is that of Hydroxyethylthiazole kinase from Granulibacter bethesdensis (strain ATCC BAA-1260 / CGDNIH1).